The primary structure comprises 231 residues: Large ribosomal subunit protein uL1 (231 aa).

The protein belongs to the universal ribosomal protein uL1 family. In terms of assembly, part of the 50S ribosomal subunit.

In terms of biological role, binds directly to 23S rRNA. The L1 stalk is quite mobile in the ribosome, and is involved in E site tRNA release. Its function is as follows. Protein L1 is also a translational repressor protein, it controls the translation of the L11 operon by binding to its mRNA. This is Large ribosomal subunit protein uL1 from Verminephrobacter eiseniae (strain EF01-2).